Reading from the N-terminus, the 540-residue chain is Acrosin-binding protein (540 aa).

A signal peptide spans 1-24 (MKLAASFLLMLLEVLLLPETPLSA). The segment at 25–104 (EEALASTPGS…ASWFESFCQF (80 aa)) is pro-ACR binding. Residues 25-272 (EEALASTPGS…NPSFFTPRVR (248 aa)) constitute a propeptide, removed in mature form. The tract at residues 181 to 266 (SLSLGGKEQQ…SKSLSSNPSF (86 aa)) is disordered. Residues 195–213 (LGLEQQHKQEQIQEHKLEE) show a composition bias toward basic and acidic residues. Residues 214-241 (AQEQEEQEEEEEEEEAKQEEGQGTEEGL) are compositionally biased toward acidic residues. Positions 256-266 (QSKSLSSNPSF) are enriched in polar residues. A pro-ACR binding region spans residues 316 to 424 (LPHTETLMVL…NQAKIPEKGR (109 aa)).

Binds pro-ACR. Does not bind the mature form of ACR. As to quaternary structure, binds pro-ACR. Does not bind mature form of ACR. The N-terminus is blocked. Post-translationally, phosphorylated on Tyr residues in capacitated sperm. In terms of processing, synthesized as a 60-kDa precursor, the 32-kDa mature form is post-translationally produced by the removal of the N-terminal half of the precursor during sperm maturation in the testis and/or epididymis.

Its subcellular location is the cytoplasmic vesicle. It localises to the secretory vesicle. It is found in the acrosome. Acrosomal protein that maintains proacrosin (pro-ACR) as an enzymatically inactive zymogen in the acrosome. Involved also in the acrosome formation. Its function is as follows. Maintains pro-ACR as an enzymatically inactive zymogen in the acrosome until acrosomal exocytosis. Partially also contributes to the assembly of acrosomal proteins to form an acrosomal granule. Functionally, rodent specific isoform that participates in the formation of the acrosomal granule into the center of the acrosomal vesicle during early spermiogenesis. In the fertilization process promotes ACR release from the acrosome during acrosomal exocytosis. The chain is Acrosin-binding protein from Rattus norvegicus (Rat).